Reading from the N-terminus, the 177-residue chain is Archaemetzincin (177 aa).

His129 is a binding site for Zn(2+). Catalysis depends on Glu130, which acts as the Proton acceptor. 6 residues coordinate Zn(2+): His133, His139, Cys140, Cys145, Cys164, and Cys167.

This sequence belongs to the peptidase M54 family. Monomer. The cofactor is Zn(2+).

Its function is as follows. Probable zinc metalloprotease whose natural substrate is unknown. The protein is Archaemetzincin of Sulfolobus acidocaldarius (strain ATCC 33909 / DSM 639 / JCM 8929 / NBRC 15157 / NCIMB 11770).